Reading from the N-terminus, the 279-residue chain is Shikimate dehydrogenase (NADP(+)) (279 aa).

Residues 19-21 (SFS) and Thr66 contribute to the shikimate site. Lys70 (proton acceptor) is an active-site residue. Residue Glu82 participates in NADP(+) binding. The shikimate site is built by Asn91 and Asp106. Residues 130 to 134 (GSGGA) and Leu222 contribute to the NADP(+) site. Tyr224 provides a ligand contact to shikimate. Position 245 (Gly245) interacts with NADP(+).

This sequence belongs to the shikimate dehydrogenase family. In terms of assembly, homodimer.

The catalysed reaction is shikimate + NADP(+) = 3-dehydroshikimate + NADPH + H(+). The protein operates within metabolic intermediate biosynthesis; chorismate biosynthesis; chorismate from D-erythrose 4-phosphate and phosphoenolpyruvate: step 4/7. In terms of biological role, involved in the biosynthesis of the chorismate, which leads to the biosynthesis of aromatic amino acids. Catalyzes the reversible NADPH linked reduction of 3-dehydroshikimate (DHSA) to yield shikimate (SA). The sequence is that of Shikimate dehydrogenase (NADP(+)) from Methanococcus maripaludis (strain C6 / ATCC BAA-1332).